A 254-amino-acid polypeptide reads, in one-letter code: PF03932 family protein CutC (254 aa).

This sequence belongs to the CutC family.

Its subcellular location is the cytoplasm. The protein is PF03932 family protein CutC of Yersinia pseudotuberculosis serotype I (strain IP32953).